The primary structure comprises 496 residues: Glycerol kinase (496 aa).

Position 12 (T12) interacts with ADP. ATP is bound by residues T12, T13, and S14. T12 is a sn-glycerol 3-phosphate binding site. R16 contributes to the ADP binding site. The sn-glycerol 3-phosphate site is built by R82, E83, Y134, and D244. Positions 82, 83, 134, 244, and 245 each coordinate glycerol. Positions 266 and 309 each coordinate ADP. ATP is bound by residues T266, G309, Q313, and G410. The ADP site is built by G410 and N414.

This sequence belongs to the FGGY kinase family.

The catalysed reaction is glycerol + ATP = sn-glycerol 3-phosphate + ADP + H(+). Its pathway is polyol metabolism; glycerol degradation via glycerol kinase pathway; sn-glycerol 3-phosphate from glycerol: step 1/1. Its activity is regulated as follows. Inhibited by fructose 1,6-bisphosphate (FBP). Its function is as follows. Key enzyme in the regulation of glycerol uptake and metabolism. Catalyzes the phosphorylation of glycerol to yield sn-glycerol 3-phosphate. This chain is Glycerol kinase, found in Treponema denticola (strain ATCC 35405 / DSM 14222 / CIP 103919 / JCM 8153 / KCTC 15104).